A 775-amino-acid polypeptide reads, in one-letter code: ADP-ribosylation factor GTPase-activating protein AGD4 (775 aa).

Residues Ala-2–Gln-226 enclose the BAR domain. A PH domain is found at Glu-288–Gly-421. The Arf-GAP domain maps to Asp-467–Ala-603. The C4-type zinc-finger motif lies at Cys-482–Cys-505. ANK repeat units lie at residues Gln-682–Ile-711 and His-715–Ile-744.

Expressed in roots, hypocotyls, cotyledons, leaf and shoot apical meristems and siliques.

Probable GTPase-activating protein. This is ADP-ribosylation factor GTPase-activating protein AGD4 (AGD4) from Arabidopsis thaliana (Mouse-ear cress).